The following is a 700-amino-acid chain: Elongation factor G (700 aa).

One can recognise a tr-type G domain in the interval 8-290; the sequence is ERYRNIGISA…GVIDFMPSPI (283 aa). GTP contacts are provided by residues 17-24, 88-92, and 142-145; these read AHIDAGKT, DTPGH, and NKMD.

It belongs to the TRAFAC class translation factor GTPase superfamily. Classic translation factor GTPase family. EF-G/EF-2 subfamily.

It localises to the cytoplasm. In terms of biological role, catalyzes the GTP-dependent ribosomal translocation step during translation elongation. During this step, the ribosome changes from the pre-translocational (PRE) to the post-translocational (POST) state as the newly formed A-site-bound peptidyl-tRNA and P-site-bound deacylated tRNA move to the P and E sites, respectively. Catalyzes the coordinated movement of the two tRNA molecules, the mRNA and conformational changes in the ribosome. This chain is Elongation factor G, found in Methylibium petroleiphilum (strain ATCC BAA-1232 / LMG 22953 / PM1).